The sequence spans 438 residues: Probable inactive protein kinase 38 (438 aa).

The 264-residue stretch at 77–340 (PRFRLALGKG…FTELQPQYFL (264 aa)) folds into the Protein kinase domain.

It belongs to the protein kinase superfamily. Tyr protein kinase family.

In Equus caballus (Horse), this protein is Probable inactive protein kinase 38 (36).